We begin with the raw amino-acid sequence, 410 residues long: D-amino acid dehydrogenase (410 aa).

Residue 9–14 (GGGIVG) coordinates FAD.

This sequence belongs to the DadA oxidoreductase family. FAD is required as a cofactor.

Its subcellular location is the cell inner membrane. It catalyses the reaction a D-alpha-amino acid + a quinone + H2O = a 2-oxocarboxylate + a quinol + NH4(+). Its activity is regulated as follows. Activity is markedly inhibited by benzoate, and moderately by SH reagents such as p-hydroxymercuribenzoate, iodoacetamide, and iodoacetate. Catalyzes the oxidative deamination of D-amino acids. Has broad substrate specificity; is mostly active on D-proline, and to a lesser extent, on several other D-amino acids such as D-alanine, D-phenylalanine and D-serine. Mediates electron transport from D-proline to coenzyme Q1 in vitro, and is involved in the electron transport chain from D-proline to the c-type cytochrome in vivo. The polypeptide is D-amino acid dehydrogenase (Helicobacter pylori (Campylobacter pylori)).